The chain runs to 99 residues: Plastocyanin (99 aa).

Residues 1-99 form the Plastocyanin-like domain; that stretch reads IEVLLGGGDG…AGMVGKVTVN (99 aa). Residues histidine 37, cysteine 84, histidine 87, and methionine 92 each contribute to the Cu cation site.

Belongs to the plastocyanin family. Requires Cu(2+) as cofactor.

The protein resides in the plastid. The protein localises to the chloroplast thylakoid membrane. Functionally, participates in electron transfer between P700 and the cytochrome b6-f complex in photosystem I. In Capsella bursa-pastoris (Shepherd's purse), this protein is Plastocyanin (PETE).